Consider the following 352-residue polypeptide: Outer membrane protein assembly factor BamC (352 aa).

A signal peptide spans 1-24 (MAISLQKSTVVKVVGVSLVMLLAA). Cys-25 is lipidated: N-palmitoyl cysteine. Cys-25 carries the S-diacylglycerol cysteine lipid modification.

It belongs to the BamC family. As to quaternary structure, part of the Bam complex, which is composed of the outer membrane protein BamA, and four lipoproteins BamB, BamC, BamD and BamE.

It is found in the cell outer membrane. Part of the outer membrane protein assembly complex, which is involved in assembly and insertion of beta-barrel proteins into the outer membrane. The chain is Outer membrane protein assembly factor BamC from Yersinia pestis.